The sequence spans 407 residues: MLRYPYFCRIHKNFLSCWLESGIYNLGVWPKKIHATAERYNEYEAQEETDQTGIQELHRSQDRDSGVMTKLHIPVMVDEVVRCLAPQKGQVFLDMTFGSGGHTRAILQKEPDITLYALDRDPTAYAIAEQLSELYPKQIRAILGQFSQAEALLMKAGVQPGTLDGVLLDLGCSSMQLDTPERGFSLRKDGPLDMRMDGDRYPDMPTAADVVNALDQQALASILRAYGEEKHAKKIASAIIQARGLYPITRTQQLASIVAGAFPPSALYARKDLLQRPTHIATKTFQAFRIFVNNELNELYTGLKTAQKFLRPGGHLVALSFHSLEDRIIKRFLLGISMTERFNLSARQKVIQKSQLDSDQENKEGVSTGKAPLMWKLIHKKVLTPEDEDVQDNPRGRSAKLRAAIKL.

The tract at residues 44–63 (EAQEETDQTGIQELHRSQDR) is disordered. S-adenosyl-L-methionine is bound by residues 100–102 (GGH), Asp-119, Phe-146, Asp-169, and Gln-176. The residue at position 358 (Ser-358) is a Phosphoserine. The segment at 386–407 (EDEDVQDNPRGRSAKLRAAIKL) is disordered. Basic residues predominate over residues 397 to 407 (RSAKLRAAIKL).

It belongs to the methyltransferase superfamily. RsmH family.

The protein localises to the mitochondrion matrix. It catalyses the reaction cytidine(839) in 12S rRNA + S-adenosyl-L-methionine = N(4)-methylcytidine(839) in 12S rRNA + S-adenosyl-L-homocysteine + H(+). Its function is as follows. N4-methylcytidine (m4C) methyltransferase responsible for the methylation of position C839 in mitochondrial 12S rRNA. Involved in the stabilization of 12S rRNA folding, therefore facilitating the assembly of the mitochondrial small ribosomal subunits. In Bos taurus (Bovine), this protein is 12S rRNA N(4)-cytidine methyltransferase METTL15 (METTL15).